Reading from the N-terminus, the 650-residue chain is Putative pumilio homolog 7, chloroplastic (650 aa).

Disordered regions lie at residues 1–22 and 200–235; these read MDEFREASSVSSSPSTPLRTPL and NDDKRNMFGNNPQQFGWPSYSSSNSGTSPYNNGQEI. Residues 1-77 constitute a chloroplast transit peptide; the sequence is MDEFREASSV…SPPFNGIIPK (77 aa). Low complexity-rich tracts occupy residues 8–22 and 217–232; these read SSVSSSPSTPLRTPL and PSYSSSNSGTSPYNNG. In terms of domain architecture, PUM-HD spans 308 to 650; that stretch reads SNTRALMSNN…RIFSRNLLKK (343 aa). Pumilio repeat units follow at residues 333–368, 369–404, 408–443, 445–480, 481–516, 517–552, 553–591, and 594–625; these read DIQGYVYLMAKDQHGCRFLQRIFDEGTSVDAMIIFN, EVIAHVVELMMDPFGNYLMQKLLDVCTEEQRTQIVL, EEPGQLIRISLNAYGTRVVQRLVETIRSGKQISLVK, ALRPGFLDLIKDLNGNHVIQRCLQCLSTEDNKFIFD, AATKFCTEIATHRHGCCVLQKCIAYSMRQQREKLIA, EISRNSLLLAQDPFGNYAVQFVIELRIPSAVAMMLA, QLKGHYVQLSMQKFSSHMVERCLMHCPESRPQIVRELVS, and HFDQLLQDPYANFVIQAALAATKGPLHASLVE.

The protein resides in the plastid. Its subcellular location is the chloroplast. The protein localises to the cytoplasm. In terms of biological role, sequence-specific RNA-binding protein that regulates translation and mRNA stability by binding the 3'-UTR of target mRNAs. This is Putative pumilio homolog 7, chloroplastic (APUM7) from Arabidopsis thaliana (Mouse-ear cress).